Consider the following 363-residue polypeptide: Peptide chain release factor 2 (363 aa).

The residue at position 251 (Q251) is an N5-methylglutamine.

Belongs to the prokaryotic/mitochondrial release factor family. In terms of processing, methylated by PrmC. Methylation increases the termination efficiency of RF2.

It is found in the cytoplasm. Peptide chain release factor 2 directs the termination of translation in response to the peptide chain termination codons UGA and UAA. This is Peptide chain release factor 2 from Helicobacter pylori (strain HPAG1).